A 67-amino-acid chain; its full sequence is Sodium channel neurotoxin MeuNaTxalpha-10 (67 aa).

Residues 2–66 (RDGYIAKPHN…VPIRIPGKCH (65 aa)) enclose the LCN-type CS-alpha/beta domain. Cystine bridges form between Cys12-Cys65, Cys16-Cys38, Cys24-Cys48, and Cys28-Cys50. Residue Arg67 is a propeptide, removed by a carboxypeptidase.

The protein belongs to the long (4 C-C) scorpion toxin superfamily. Sodium channel inhibitor family. Alpha subfamily. As to expression, expressed by the venom gland.

The protein resides in the secreted. Alpha toxins bind voltage-independently at site-3 of sodium channels (Nav) and inhibit the inactivation of the activated channels, thereby blocking neuronal transmission. The polypeptide is Sodium channel neurotoxin MeuNaTxalpha-10 (Mesobuthus eupeus (Lesser Asian scorpion)).